Reading from the N-terminus, the 296-residue chain is Xyloglucan endotransglucosylase/hydrolase 1 (296 aa).

An N-terminal signal peptide occupies residues 1–23 (MGSSSSMWTVCVILASLASAALC). A GH16 domain is found at 24–222 (ANPRRPVDVQ…WSKAPFIAAY (199 aa)). Glu108 functions as the Nucleophile in the catalytic mechanism. The active-site Proton donor is Glu112. Glu112 contributes to the xyloglucan binding site. A glycan (N-linked (GlcNAc...) asparagine) is linked at Asn116. Xyloglucan-binding positions include 125–127 (QTN), 135–137 (DRE), 201–202 (DW), and Gly206. 2 disulfides stabilise this stretch: Cys230-Cys239 and Cys276-Cys290. Xyloglucan is bound at residue Arg281.

Belongs to the glycosyl hydrolase 16 family. XTH group 1 subfamily. Post-translationally, contains at least one intrachain disulfide bond essential for its enzymatic activity. N-glycosylated; not essential for its enzymatic activity.

It localises to the secreted. The protein localises to the cell wall. The protein resides in the extracellular space. It is found in the apoplast. It carries out the reaction breaks a beta-(1-&gt;4) bond in the backbone of a xyloglucan and transfers the xyloglucanyl segment on to O-4 of the non-reducing terminal glucose residue of an acceptor, which can be a xyloglucan or an oligosaccharide of xyloglucan.. Catalyzes xyloglucan endohydrolysis (XEH) and/or endotransglycosylation (XET). Cleaves and religates xyloglucan polymers, an essential constituent of the primary cell wall, and thereby participates in cell wall construction of growing tissues. In Glycine max (Soybean), this protein is Xyloglucan endotransglucosylase/hydrolase 1.